The chain runs to 198 residues: MAEEFLNTHNASILLSAANKSHYPQDDLPEVALAGRSNVGKSSFINTLLGRKNLARTSSKPGKTQLLNFYNIDDKLRFVDVPGYGYAKVSKTERAKWGKMIEEYLVTRDNLRVVVSLVDFRHDPSADDIQIYEFLKYYEIPVIIVATKADKIPRGKWNKHESSIKKKLNFDKKDHFIVFSSVDRTGLDESWDTILSEL.

Residues 27 to 198 (DLPEVALAGR…ESWDTILSEL (172 aa)) enclose the EngB-type G domain. GTP is bound by residues 35–42 (GRSNVGKS), 62–66 (GKTQL), 80–83 (DVPG), 147–150 (TKAD), and 179–181 (FSS). Positions 42 and 64 each coordinate Mg(2+).

It belongs to the TRAFAC class TrmE-Era-EngA-EngB-Septin-like GTPase superfamily. EngB GTPase family. Requires Mg(2+) as cofactor.

In terms of biological role, necessary for normal cell division and for the maintenance of normal septation. The sequence is that of Probable GTP-binding protein EngB from Streptococcus agalactiae serotype III (strain NEM316).